The sequence spans 132 residues: DNA-directed RNA polymerase subunit omega (132 aa).

The interval 76–105 is disordered; that stretch reads EVDEPEQDAASIAEGQLTSGSQDEDEMPET.

This sequence belongs to the RNA polymerase subunit omega family. In terms of assembly, the RNAP catalytic core consists of 2 alpha, 1 beta, 1 beta' and 1 omega subunit. When a sigma factor is associated with the core the holoenzyme is formed, which can initiate transcription.

The enzyme catalyses RNA(n) + a ribonucleoside 5'-triphosphate = RNA(n+1) + diphosphate. Its function is as follows. Promotes RNA polymerase assembly. Latches the N- and C-terminal regions of the beta' subunit thereby facilitating its interaction with the beta and alpha subunits. The sequence is that of DNA-directed RNA polymerase subunit omega from Allorhizobium ampelinum (strain ATCC BAA-846 / DSM 112012 / S4) (Agrobacterium vitis (strain S4)).